Here is an 831-residue protein sequence, read N- to C-terminus: Probable inactive serine/threonine-protein kinase DDB_G0274613 (831 aa).

The segment at 9 to 63 (CSICSEEVIDFAAIFSSNKKFGDKACKHNFCVSCLTYLMEYNTRNKKALCCPICR) adopts an RING-type zinc-finger fold. Residues 83-348 (RKLSSAQIFL…LEEMKLLYQF (266 aa)) are a coiled coil. The Protein kinase domain occupies 414-787 (QIHKVSIGNG…ANQAAFHKFF (374 aa)). The tract at residues 657–703 (NNNNNNNNNNNNNNNNNNNNNNNNNNNNNNNNNNNNNNNNNIESNFN) is disordered.

Belongs to the protein kinase superfamily. CMGC Ser/Thr protein kinase family.

The polypeptide is Probable inactive serine/threonine-protein kinase DDB_G0274613 (Dictyostelium discoideum (Social amoeba)).